The sequence spans 353 residues: Putative protein SPATA31J1 (353 aa).

Residues 34–54 (IPQIIHFVLFVVFSLVILIIL) form a helical membrane-spanning segment. The disordered stretch occupies residues 122-271 (EGSSHHLPRQ…NPGWVSWSDS (150 aa)). The segment covering 182-195 (SVESLGSPSSLSSS) has biased composition (low complexity). Polar residues predominate over residues 211-221 (PPASTLSPNPT). Residues 222 to 237 (SSTESLGYLSSLSSSQ) are compositionally biased toward low complexity. Residues 244–262 (PLKHPSHKPRGRSLPRRRN) are compositionally biased toward basic residues.

The protein belongs to the SPATA31 family.

Its subcellular location is the membrane. This is Putative protein SPATA31J1 from Homo sapiens (Human).